The primary structure comprises 93 residues: Protein LSO1 (93 aa).

The tract at residues 1–73 (MHNTGKRYSE…TEKLRAKKER (73 aa)) is disordered. A coiled-coil region spans residues 20–83 (ARKRRQAYEK…DQLLAAEEEA (64 aa)). 2 stretches are compositionally biased toward basic and acidic residues: residues 25 to 49 (QAYEKDQLEKQQLEAQEAQRWEEGA) and 57 to 73 (LIMEQKKTEKLRAKKER).

Its subcellular location is the nucleus. The protein resides in the cytoplasm. Functionally, likely to play a role in iron homeostasis. This chain is Protein LSO1, found in Saccharomyces cerevisiae (strain ATCC 204508 / S288c) (Baker's yeast).